A 1407-amino-acid chain; its full sequence is DNA-directed RNA polymerase subunit beta' (1407 aa).

Positions 70, 72, 85, and 88 each coordinate Zn(2+). Mg(2+) contacts are provided by aspartate 460, aspartate 462, and aspartate 464. 4 residues coordinate Zn(2+): cysteine 814, cysteine 888, cysteine 895, and cysteine 898.

This sequence belongs to the RNA polymerase beta' chain family. In terms of assembly, the RNAP catalytic core consists of 2 alpha, 1 beta, 1 beta' and 1 omega subunit. When a sigma factor is associated with the core the holoenzyme is formed, which can initiate transcription. The cofactor is Mg(2+). Requires Zn(2+) as cofactor.

The enzyme catalyses RNA(n) + a ribonucleoside 5'-triphosphate = RNA(n+1) + diphosphate. Functionally, DNA-dependent RNA polymerase catalyzes the transcription of DNA into RNA using the four ribonucleoside triphosphates as substrates. The chain is DNA-directed RNA polymerase subunit beta' from Cronobacter sakazakii (strain ATCC BAA-894) (Enterobacter sakazakii).